Reading from the N-terminus, the 216-residue chain is Protein-L-isoaspartate O-methyltransferase (216 aa).

Residue serine 61 is part of the active site.

This sequence belongs to the methyltransferase superfamily. L-isoaspartyl/D-aspartyl protein methyltransferase family.

The protein resides in the cytoplasm. It carries out the reaction [protein]-L-isoaspartate + S-adenosyl-L-methionine = [protein]-L-isoaspartate alpha-methyl ester + S-adenosyl-L-homocysteine. Its function is as follows. Catalyzes the methyl esterification of L-isoaspartyl residues in peptides and proteins that result from spontaneous decomposition of normal L-aspartyl and L-asparaginyl residues. It plays a role in the repair and/or degradation of damaged proteins. This chain is Protein-L-isoaspartate O-methyltransferase, found in Dinoroseobacter shibae (strain DSM 16493 / NCIMB 14021 / DFL 12).